A 341-amino-acid chain; its full sequence is N-acetyl-gamma-glutamyl-phosphate reductase (341 aa).

The active site involves Cys147.

Belongs to the NAGSA dehydrogenase family. Type 1 subfamily.

The protein resides in the cytoplasm. It carries out the reaction N-acetyl-L-glutamate 5-semialdehyde + phosphate + NADP(+) = N-acetyl-L-glutamyl 5-phosphate + NADPH + H(+). Its pathway is amino-acid biosynthesis; L-arginine biosynthesis; N(2)-acetyl-L-ornithine from L-glutamate: step 3/4. Its function is as follows. Catalyzes the NADPH-dependent reduction of N-acetyl-5-glutamyl phosphate to yield N-acetyl-L-glutamate 5-semialdehyde. The sequence is that of N-acetyl-gamma-glutamyl-phosphate reductase from Staphylococcus epidermidis (strain ATCC 35984 / DSM 28319 / BCRC 17069 / CCUG 31568 / BM 3577 / RP62A).